The chain runs to 904 residues: MNSGEKQDNLQAWGQQPSSSYSNTQQQHGQITGQIPLTITNQVEAHDNDFHMQDASNDELEKSKKIAEQPTEHPQQHHQQQPAVPRFPPQSRQPQAILRFPQPPITSINKANNSNSQNFFPQQEVLQSRPKKHRVSMTNAEAANTPGMPPEKLPAKKLSADSQRPLFRDSNVFQRSAGQFTNDNGPSSSSAIVGAPFDANSSSKPVHIQQFRNPNDAPVTKLTSDLIKTYKAINEKFQSFYLRKNVRRSTVGRHTSLDSSGKPKTGKEASSSDANLIETFSIHNAVPNTSSSGNQPHYDSHVNAPPLLDTNAPPTSTMVVPMRTETESQQQMRQKSSRGGPYNNGYDDQNYDYILKNGEIFDKRYVILSDTPVGKGSFGQVTKAYDTVTKEEVAIKIIKNKKTFFDQAQIEIHLLELTNAHDKDNKYNIVTLKGHFVHRAHLCLVFELLSYNLYDLLKNTNFRGVSLNLARKFAQQLGKTLLFLSSPELSIIHCDLKPENVLLVNAKRSQIRVIDFGSSCQTGHRIYQYIQSRFYRSPEVLLGIAYDTKIDMWSLGCILVEMHTGEPLFAGSSEVDQMMKIVEVLGMPPKEMLDIGPKTHKYFDKTEDGIYYCKKTRDGYRHTYKAPGARKLHEILGVTSGGPGGRRLGEPGHSVEDYSKFKDLIKRMLNFDPKQRILRTTLFPVSHTAYNQNLYHQQQIDQVPAVGSVYIEDNGMYRPVPTSSHPISVTSSFDDGDVIEIDPNRRRYSQQNYHNPNYQYSQQPQSSSQQQQQQYQQSQRAQLEKQQQLQQQQQQQQQQRQHLSHQPSQSVQQHSSSSSRSRPRQQDQAEWRTQLELEEAFKQRKAEEATAPRSLQYNPQQVVGVQLIKRVLISKLFQGSMSHGNVNAGSSRDMEKHDYPNNKL.

3 disordered regions span residues 1–151 (MNSG…MPPE), 250–272 (TVGR…ASSS), and 285–345 (AVPN…YNNG). Positions 9 to 23 (NLQAWGQQPSSSYSN) are enriched in polar residues. Residues 24–35 (TQQQHGQITGQI) are compositionally biased toward low complexity. Positions 59–75 (ELEKSKKIAEQPTEHPQ) are enriched in basic and acidic residues. Low complexity predominate over residues 112 to 123 (NNSNSQNFFPQQ). Over residues 286 to 297 (VPNTSSSGNQPH) the composition is skewed to polar residues. One can recognise a Protein kinase domain in the interval 367–690 (ILSDTPVGKG…TLFPVSHTAY (324 aa)). Residues 373–381 (VGKGSFGQV) and Lys-396 contribute to the ATP site. Asp-495 serves as the catalytic Proton acceptor. Disordered regions lie at residues 717–830 (YRPV…DQAE) and 881–904 (MSHG…NNKL). Polar residues predominate over residues 721–733 (PTSSHPISVTSSF). Over residues 749–820 (SQQNYHNPNY…VQQHSSSSSR (72 aa)) the composition is skewed to low complexity. Polar residues predominate over residues 881–890 (MSHGNVNAGS). Residues 892–904 (RDMEKHDYPNNKL) show a composition bias toward basic and acidic residues.

This sequence belongs to the protein kinase superfamily. CMGC Ser/Thr protein kinase family. MNB/DYRK subfamily. Mg(2+) is required as a cofactor.

The protein localises to the nucleus. The enzyme catalyses L-seryl-[protein] + ATP = O-phospho-L-seryl-[protein] + ADP + H(+). It carries out the reaction L-threonyl-[protein] + ATP = O-phospho-L-threonyl-[protein] + ADP + H(+). The catalysed reaction is L-tyrosyl-[protein] + ATP = O-phospho-L-tyrosyl-[protein] + ADP + H(+). Its function is as follows. Possible role in the function of olfactory neurons. This Caenorhabditis briggsae protein is Dual specificity tyrosine-phosphorylation-regulated kinase mbk-1.